Consider the following 176-residue polypeptide: Ribosome rescue factor SmrB (176 aa).

A Smr domain is found at 93–168 (LDLHGYRQSE…GDAALLVLID (76 aa)).

The protein belongs to the SmrB family. As to quaternary structure, associates with collided ribosomes, but not with correctly translating polysomes.

Functionally, acts as a ribosome collision sensor. Detects stalled/collided disomes (pairs of ribosomes where the leading ribosome is stalled and a second ribosome has collided with it) and endonucleolytically cleaves mRNA at the 5' boundary of the stalled ribosome. Stalled/collided disomes form a new interface (primarily via the 30S subunits) that binds SmrB. Cleaved mRNA becomes available for tmRNA ligation, leading to ribosomal subunit dissociation and rescue of stalled ribosomes. This Shewanella sp. (strain MR-4) protein is Ribosome rescue factor SmrB.